The sequence spans 475 residues: Bystin (475 aa).

2 stretches are compositionally biased toward basic residues: residues 1 to 12 (MGKDVKKVHKLR) and 29 to 41 (KPHK…RKKK). Disordered regions lie at residues 1–57 (MGKD…ESVI) and 106–149 (DFID…QFGV). Composition is skewed to acidic residues over residues 45–54 (ENDTGIDETE) and 107–119 (FIDD…DADQ).

It belongs to the bystin family.

It is found in the nucleus. It localises to the nucleolus. Its function is as follows. Required for processing of 20S pre-rRNA precursor and biogenesis of 40S ribosomal subunits. In Dictyostelium discoideum (Social amoeba), this protein is Bystin (bysl).